The primary structure comprises 1685 residues: Myomesin-1 (1685 aa).

A disordered region spans residues 33–80; it reads KKRSAVYTQGSTAYSSRSSAAHRRESEAFRRASASSSQQQASQHALSS. Composition is skewed to low complexity over residues 41-51 and 63-80; these read QGSTAYSSRSS and RASA…ALSS. Ser-113 bears the Phosphoserine mark. Residues 177-244 are disordered; the sequence is GITTSKQSTA…TSEKKSRKVV (68 aa). The span at 179–220 shows a compositional bias: low complexity; it reads TTSKQSTASKQTTASKQSTASKQSTASKQSTASRQSTASRQS. 6 tandem repeats follow at residues 182-187, 188-193, 194-199, 200-205, 206-211, and 212-217. The 6 X 6 AA tandem repeats stretch occupies residues 182-217; that stretch reads KQSTASKQTTASKQSTASKQSTASKQSTASRQSTAS. Residues 221-233 are compositionally biased toward polar residues; that stretch reads VVSKQATSALQQE. Ig-like C2-type domains follow at residues 277–368 and 396–498; these read PEFI…ASVV and PYGY…AYVF. Fibronectin type-III domains are found at residues 512–607, 640–734, and 741–834; these read APLD…ALDP, PPTD…VVGD, and APGK…VKAA. The segment at 840–938 is disordered; the sequence is SPDVCPALSD…TDRAPPSPPC (99 aa). Residues 874–888 show a composition bias toward low complexity; sequence LLGSKPNKPSLPSSS. A phosphoserine mark is found at Ser-883 and Ser-887. The span at 889–902 shows a compositional bias: polar residues; it reads QNLGQTEVSKVSET. Over residues 920–931 the composition is skewed to basic and acidic residues; that stretch reads SKSDPLKKKTDR. Fibronectin type-III domains follow at residues 933 to 1034 and 1041 to 1140; these read PPSP…CEEW and PPHS…TRPG. A Phosphoserine modification is found at Ser-1054. 3 consecutive Ig-like C2-type domains span residues 1132–1230, 1358–1444, and 1573–1662; these read PVVA…EELK, PHFV…LKLV, and RVLG…FTVS. A disulfide bridge links Cys-1160 with Cys-1210.

Homodimer. Interacts with TTN/titin. Interacts with PNKD.

It is found in the cytoplasm. Its subcellular location is the myofibril. The protein resides in the sarcomere. The protein localises to the m line. In terms of biological role, major component of the vertebrate myofibrillar M band. Binds myosin, titin, and light meromyosin. This binding is dose dependent. This Homo sapiens (Human) protein is Myomesin-1 (MYOM1).